A 170-amino-acid chain; its full sequence is uncharacterized protein (170 aa).

This is an uncharacterized protein from Arabidopsis thaliana (Mouse-ear cress).